A 154-amino-acid polypeptide reads, in one-letter code: ATP synthase subunit b', chloroplastic (154 aa).

The chain crosses the membrane as a helical span at residues 22 to 42 (GTLPLIAIQFLILMFLLNILL).

Belongs to the ATPase B chain family. F-type ATPases have 2 components, F(1) - the catalytic core - and F(0) - the membrane proton channel. F(1) has five subunits: alpha(3), beta(3), gamma(1), delta(1), epsilon(1). F(0) has four main subunits: a(1), b(1), b'(1) and c(10-14). The alpha and beta chains form an alternating ring which encloses part of the gamma chain. F(1) is attached to F(0) by a central stalk formed by the gamma and epsilon chains, while a peripheral stalk is formed by the delta, b and b' chains.

It is found in the plastid. The protein localises to the chloroplast thylakoid membrane. Functionally, f(1)F(0) ATP synthase produces ATP from ADP in the presence of a proton or sodium gradient. F-type ATPases consist of two structural domains, F(1) containing the extramembraneous catalytic core and F(0) containing the membrane proton channel, linked together by a central stalk and a peripheral stalk. During catalysis, ATP synthesis in the catalytic domain of F(1) is coupled via a rotary mechanism of the central stalk subunits to proton translocation. In terms of biological role, component of the F(0) channel, it forms part of the peripheral stalk, linking F(1) to F(0). The b'-subunit is a diverged and duplicated form of b found in plants and photosynthetic bacteria. The protein is ATP synthase subunit b', chloroplastic of Vaucheria litorea (Yellow-green alga).